Here is a 290-residue protein sequence, read N- to C-terminus: Pyridoxal kinase PdxY (290 aa).

Residues Ser-12 and 47–48 (TQ) contribute to the substrate site. ATP-binding positions include Asp-114, Glu-151, Lys-184, and 211–214 (RPLL). Asp-225 serves as a coordination point for substrate.

This sequence belongs to the pyridoxine kinase family. PdxY subfamily. As to quaternary structure, homodimer. Mg(2+) is required as a cofactor.

It catalyses the reaction pyridoxal + ATP = pyridoxal 5'-phosphate + ADP + H(+). Its pathway is cofactor metabolism; pyridoxal 5'-phosphate salvage; pyridoxal 5'-phosphate from pyridoxal: step 1/1. Its function is as follows. Pyridoxal kinase involved in the salvage pathway of pyridoxal 5'-phosphate (PLP). Catalyzes the phosphorylation of pyridoxal to PLP. This chain is Pyridoxal kinase PdxY, found in Pseudomonas putida (strain W619).